The primary structure comprises 759 residues: Glycerophosphodiester phosphodiesterase GDPDL3 (759 aa).

The N-terminal stretch at 1 to 27 (MRGLLRASSLLLCGVILIQLLAAQIHA) is a signal peptide. Topologically, residues 28–738 (QSKKPKSPWP…TNAQAPSGQT (711 aa)) are extracellular. The 301-residue stretch at 44-344 (PLVIARGGFS…DFPITASASL (301 aa)) folds into the GP-PDE 1 domain. N-linked (GlcNAc...) asparagine glycans are attached at residues Asn99, Asn186, Asn242, Asn251, Asn326, Asn353, Asn413, Asn424, Asn488, Asn528, Asn540, and Asn647. Residues 360-661 (FLVITKDGAS…EFPFTAARYK (302 aa)) enclose the GP-PDE 2 domain. Residues 702–734 (FTDADVTEPPLPPVTAKAPTSSPGTPSTNAQAP) are disordered. Polar residues predominate over residues 719–734 (APTSSPGTPSTNAQAP). The chain crosses the membrane as a helical span at residues 739-759 (RITLSLLLSVFAMVLASLLLL).

It belongs to the glycerophosphoryl diester phosphodiesterase family. In terms of tissue distribution, expressed in roots, shoots, rosette and cauline leaves, stems, flowers and siliques.

Its subcellular location is the cell membrane. It catalyses the reaction a sn-glycero-3-phosphodiester + H2O = an alcohol + sn-glycerol 3-phosphate + H(+). In terms of biological role, involved in primary cell wall organization. Required for the accumulation of crystalline cellulose. The sequence is that of Glycerophosphodiester phosphodiesterase GDPDL3 from Arabidopsis thaliana (Mouse-ear cress).